The chain runs to 96 residues: UPF0235 protein SO_3356 (96 aa).

This sequence belongs to the UPF0235 family.

The protein is UPF0235 protein SO_3356 of Shewanella oneidensis (strain ATCC 700550 / JCM 31522 / CIP 106686 / LMG 19005 / NCIMB 14063 / MR-1).